A 445-amino-acid polypeptide reads, in one-letter code: MSNRKYFGTDGIRGRVGNAPITPDFVLKLGWAAGKVLARHGSRKIIIGKDTRISGYMLESALEAGLAAAGLSASFTGPMPTPAVAYLTRTFRAEAGIVISASHNPFYDNGIKFFSIDGTKLPDDVEEAIEAEMEKEITCVDSAELGKASRIVDAAGRYIEFCKGTFPNELSLNGLKVVVDCANGATYHIAPNVLRELGATVIAIGCEPNGVNINEEVGATDVRALQARVLAEKADLGIALDGDGDRVIMVDHEGNKVDGDQIMYIIAREGLRQGQLRGGAVGTLMSNMGLELALKQLGIPFSRAKVGDRYVLEKLQEKGWRIGAENSGHVILLDKTTTGDGIVAGLQVLAAMVRNHMSLHDLCSGMKMFPQILVNVRYTAGSGDPLENEAVKAVTADVEATLGNRGRVLLRKSGTEPLIRVMVEGEDEAQVTAFAHRIADAVKAV.

The active-site Phosphoserine intermediate is the Ser-102. Positions 102, 241, 243, and 245 each coordinate Mg(2+). Ser-102 carries the post-translational modification Phosphoserine.

The protein belongs to the phosphohexose mutase family. Requires Mg(2+) as cofactor. Post-translationally, activated by phosphorylation.

It carries out the reaction alpha-D-glucosamine 1-phosphate = D-glucosamine 6-phosphate. Functionally, catalyzes the conversion of glucosamine-6-phosphate to glucosamine-1-phosphate. This chain is Phosphoglucosamine mutase, found in Salmonella choleraesuis (strain SC-B67).